The sequence spans 93 residues: Allatostatin C (93 aa).

The first 23 residues, 1–23, serve as a signal peptide directing secretion; sequence MSSVRNIAALALVLLVLAEWSAA. Positions 24–61 are excised as a propeptide; that stretch reads MPTTDKDKERLLNTVDLIDDDGSIETALINYLFTKQIV. A disulfide bridge connects residues cysteine 83 and cysteine 90.

Its subcellular location is the secreted. In terms of biological role, inhibits juvenile hormone biosynthesis. The polypeptide is Allatostatin C (Camponotus floridanus (Florida carpenter ant)).